A 488-amino-acid polypeptide reads, in one-letter code: MSQGACENQLLSKLALSDKHGEASPYFHGWKAYDNNPFHPTHNPQGVIQMGLAENQLCSDLIKEWIKENPQASICTAEGIDSFSDIAVFQDYHGLKQFRQAIATFMERARGGRVRFEAERVVMSGGATGANETIMFCLADPGDAFLVPTPYYAAFDRDLRWRTGVRIIPVECSSSNNFQITKQALESAYLKAQETGIKIKGLIISNPLGTSLDRETLESLVSFINDKQIHLVCDEIYAATVFAEPGFISVAEIIQEMYYVNRDLIHIVYSLSKDMGLPGFRVGVVYSYNDVVVSCARRMSSFGLVSSQTQSFLAAMLSDQSFVDNFLVEVSKRVAKRHHMFTEGLEEMGISCLRSNAGLFVLMDLRHMLKDQTFDSEMALWRVIINKVKINVSPGSSFHCSEPGWFRVCFANMDEDTLQIALERIKDFVVGDRANKNKNCNCICNNKRENKKRKSFQKNLKLSLSSMRYEEHVRSPKLMSPHSPLLRA.

Lysine 273 is subject to N6-(pyridoxal phosphate)lysine.

The protein belongs to the class-I pyridoxal-phosphate-dependent aminotransferase family. In terms of assembly, homodimer. As to expression, expressed in young leaves and flowers. Not expressed in roots.

The chain is 1-aminocyclopropane-1-carboxylate synthase-like protein 1 (ACS1) from Arabidopsis thaliana (Mouse-ear cress).